Here is a 571-residue protein sequence, read N- to C-terminus: Chondroitin sulfate proteoglycan 5 (571 aa).

An N-terminal signal peptide occupies residues 1 to 30 (MGRAGGGGPGWGPPPVLLLLGVTLVLTAGA). Over 31 to 428 (VPAREAGSAI…SIITDFQVMC (398 aa)) the chain is Extracellular. A glycan (O-linked (Xyl...) (chondroitin sulfate) serine) is linked at Ser38. A glycan (N-linked (GlcNAc...) asparagine) is linked at Asn57. A disordered region spans residues 57-91 (NDTREEAGLPAAGEDETSWTERGSELAAVGPGVGP). The O-linked (GalNAc...) threonine glycan is linked to Thr76. A glycan (O-linked (Xyl...) (chondroitin sulfate) serine) is linked at Ser123. O-linked (GalNAc...) threonine glycosylation occurs at Thr132. 3 disordered regions span residues 137-169 (DEAL…KPSL), 186-254 (GGST…TPSW), and 279-357 (DDLE…DLAT). Ser143 carries O-linked (GalNAc...) serine glycosylation. O-linked (GalNAc...) threonine glycosylation is found at Thr144 and Thr153. O-linked (GalNAc...) serine glycans are attached at residues Ser156 and Ser160. Thr162 and Thr198 each carry an O-linked (GalNAc...) threonine glycan. The span at 214-223 (IDIDYFEGLD) shows a compositional bias: acidic residues. Thr240 carries an O-linked (GalNAc...) threonine glycan. The interaction with TNC and TNR stretch occupies residues 270–306 (DFYPTTSFYDDLEEEEEEEEDKDAVGGGDLEDESDLL). Positions 279–291 (DDLEEEEEEEEDK) are enriched in acidic residues. Thr318 and Thr322 each carry an O-linked (GalNAc...) threonine glycan. Asn372 is a glycosylation site (N-linked (GlcNAc...) asparagine). One can recognise an EGF-like domain in the interval 376-418 (RSVCDLFPSYCHNGGQCYLVENIGAFCRCNTQDYIWHKGMRCE). Intrachain disulfides connect Cys379–Cys392, Cys386–Cys402, and Cys404–Cys417. A helical transmembrane segment spans residues 429–449 (VAVGSAALVLLLLFMMTVFFA). The segment at 447 to 465 (FFAKKLYLLKTENTKLRRT) is interaction with GOPC. The Cytoplasmic segment spans residues 450–571 (KKLYLLKTEN…EVNCLQNNLT (122 aa)). Phosphoserine occurs at positions 472, 480, 488, and 548. A disordered region spans residues 538–563 (EESFNIQNSMSPKLEGGKGDQDDLEV).

In terms of assembly, interacts with ERBB3 and GOPC. Binds TNR and probably TNC. Interacts with MDK; this interaction is independent of the presence of chondroitin sulfate chains and promotes elongation of oligodendroglial precursor-like cells. N-glycosylated. In terms of processing, O-glycosylated; contains chondroitin sulfate glycans. Part-time proteoglycan, expressed in part as a proteoglycan exhibiting chondroitin sulfate glycans and in part as a non-proteoglycan form. The relative amount of both forms depends on tissues and tissue maturation. Post-translationally, phosphorylated; in intracellular and extracellular parts. Expressed in cerebral cortex and cerebellum. Expressed in retina (at protein level).

It is found in the cell membrane. It localises to the synaptic cell membrane. The protein localises to the endoplasmic reticulum membrane. Its subcellular location is the golgi apparatus membrane. The protein resides in the cell surface. It is found in the secreted. Its function is as follows. May function as a growth and differentiation factor involved in neuritogenesis. May induce ERBB3 activation. This Rattus norvegicus (Rat) protein is Chondroitin sulfate proteoglycan 5 (Cspg5).